We begin with the raw amino-acid sequence, 468 residues long: Probable acid phosphatase DIA3 (468 aa).

The first 20 residues, M1–S20, serve as a signal peptide directing secretion. Residue H76 is the Nucleophile of the active site. N-linked (GlcNAc...) asparagine glycans are attached at residues N98, N163, N193, N202, N238, N251, and N316. D339 serves as the catalytic Proton donor. N-linked (GlcNAc...) asparagine glycans are attached at residues N357, N391, N457, and N462.

This sequence belongs to the histidine acid phosphatase family.

The enzyme catalyses a phosphate monoester + H2O = an alcohol + phosphate. This is Probable acid phosphatase DIA3 (DIA3) from Saccharomyces cerevisiae (strain ATCC 204508 / S288c) (Baker's yeast).